A 237-amino-acid polypeptide reads, in one-letter code: Segregation and condensation protein A (237 aa).

It belongs to the ScpA family. In terms of assembly, component of a cohesin-like complex composed of ScpA, ScpB and the Smc homodimer, in which ScpA and ScpB bind to the head domain of Smc. The presence of the three proteins is required for the association of the complex with DNA.

It localises to the cytoplasm. In terms of biological role, participates in chromosomal partition during cell division. May act via the formation of a condensin-like complex containing Smc and ScpB that pull DNA away from mid-cell into both cell halves. The polypeptide is Segregation and condensation protein A (Streptococcus thermophilus (strain ATCC BAA-250 / LMG 18311)).